Reading from the N-terminus, the 162-residue chain is CASP-like protein 0U1 (162 aa).

Topologically, residues 1–11 (MAAVEAAKTPR) are cytoplasmic. The chain crosses the membrane as a helical span at residues 12–32 (FILLIIEWVFALVAFAVMGHY). Topologically, residues 33-43 (LFDDRRSSFEY) are extracellular. A helical membrane pass occupies residues 44–64 (LTAICILVWLVVMIYMVILCC). Residues 65-69 (GRALP) lie on the Cytoplasmic side of the membrane. Residues 70–90 (PLIEAAIFLLFAILVFIAFLV) traverse the membrane as a helical segment. Topologically, residues 91 to 123 (TAVKCNNSETIVIAGQTISRKVCEGESEPKAAA) are extracellular. Asparagine 96 is a glycosylation site (N-linked (GlcNAc...) asparagine). A helical membrane pass occupies residues 124-144 (AFAFLLGLLLAGSSVLGCIAF). Residues 145–162 (RRPSAPPLSSFQNPTSSV) lie on the Cytoplasmic side of the membrane.

This sequence belongs to the Casparian strip membrane proteins (CASP) family. As to quaternary structure, homodimer and heterodimers.

The protein localises to the cell membrane. The chain is CASP-like protein 0U1 from Chlorokybus atmophyticus (Soil alga).